The chain runs to 256 residues: MSHPPKLRLGVNVDHIATLRNARGGRAPDPVRAALLAIEAGADGITAHLREDRRHIRDDDMARLKAQISRPLNFEMAATEEMVRIALATKPHACCLVPERREELTTEGGLDVVGQHNALAPAIARLSEAGIRVSLFIAADPAQIEMAARLRAPVIEIHTGGWCDAITDGHHDKADAEWQRIVAGARQAYAAGLEVHAGHGLDYATAEQIAALPEIRELNIGYFIMGEALFVGLAESVRTMRAAMDRGRDRATGATA.

3-amino-2-oxopropyl phosphate is bound at residue Asn-12. 14 to 15 (DH) contacts 1-deoxy-D-xylulose 5-phosphate. A 3-amino-2-oxopropyl phosphate-binding site is contributed by Arg-23. His-48 functions as the Proton acceptor in the catalytic mechanism. 1-deoxy-D-xylulose 5-phosphate contacts are provided by Arg-50 and His-55. The active-site Proton acceptor is Glu-75. Thr-105 provides a ligand contact to 1-deoxy-D-xylulose 5-phosphate. His-199 functions as the Proton donor in the catalytic mechanism. 3-amino-2-oxopropyl phosphate contacts are provided by residues Gly-200 and 221–222 (GY).

The protein belongs to the PNP synthase family. Homooctamer; tetramer of dimers.

The protein resides in the cytoplasm. The enzyme catalyses 3-amino-2-oxopropyl phosphate + 1-deoxy-D-xylulose 5-phosphate = pyridoxine 5'-phosphate + phosphate + 2 H2O + H(+). It participates in cofactor biosynthesis; pyridoxine 5'-phosphate biosynthesis; pyridoxine 5'-phosphate from D-erythrose 4-phosphate: step 5/5. Catalyzes the complicated ring closure reaction between the two acyclic compounds 1-deoxy-D-xylulose-5-phosphate (DXP) and 3-amino-2-oxopropyl phosphate (1-amino-acetone-3-phosphate or AAP) to form pyridoxine 5'-phosphate (PNP) and inorganic phosphate. The protein is Pyridoxine 5'-phosphate synthase of Bradyrhizobium sp. (strain ORS 278).